Here is a 114-residue protein sequence, read N- to C-terminus: Cystatin Pr17a (114 aa).

An N-terminal signal peptide occupies residues 1–18 (MSCLKIITLFLFLAAVIA). Residues 31 to 109 (GAPEQINPND…QAWLKKTSVK (79 aa)) enclose the Cystatin domain. An intrachain disulfide couples Cys-93 to Cys-113.

It belongs to the cystatin family. Expressed by the venom gland (posterior main gland) (at protein level).

The protein localises to the secreted. The protein is Cystatin Pr17a of Platymeris rhadamanthus (Red spot assassin bug).